Reading from the N-terminus, the 46-residue chain is Daisho2 (46 aa).

The first 22 residues, 1 to 22, serve as a signal peptide directing secretion; it reads MNCLKICGFFFALIAALATAEA.

Hemolymph (at protein level).

It localises to the secreted. Functionally, peptide which plays a role in the humoral immune response to a subset of filamentous fungi, including F.oxysporum and F.verticillioides. The sequence is that of Daisho2 from Drosophila melanogaster (Fruit fly).